A 183-amino-acid polypeptide reads, in one-letter code: ATP-dependent protease subunit HslV (183 aa).

The active site involves T7. Positions 162, 165, and 168 each coordinate Na(+).

Belongs to the peptidase T1B family. HslV subfamily. In terms of assembly, a double ring-shaped homohexamer of HslV is capped on each side by a ring-shaped HslU homohexamer. The assembly of the HslU/HslV complex is dependent on binding of ATP.

It localises to the cytoplasm. It carries out the reaction ATP-dependent cleavage of peptide bonds with broad specificity.. Allosterically activated by HslU binding. Its function is as follows. Protease subunit of a proteasome-like degradation complex believed to be a general protein degrading machinery. The sequence is that of ATP-dependent protease subunit HslV from Chromobacterium violaceum (strain ATCC 12472 / DSM 30191 / JCM 1249 / CCUG 213 / NBRC 12614 / NCIMB 9131 / NCTC 9757 / MK).